A 515-amino-acid chain; its full sequence is Bifunctional purine biosynthesis protein PurH (515 aa).

The MGS-like domain occupies methionine 1 to valine 145.

It belongs to the PurH family.

The catalysed reaction is (6R)-10-formyltetrahydrofolate + 5-amino-1-(5-phospho-beta-D-ribosyl)imidazole-4-carboxamide = 5-formamido-1-(5-phospho-D-ribosyl)imidazole-4-carboxamide + (6S)-5,6,7,8-tetrahydrofolate. It carries out the reaction IMP + H2O = 5-formamido-1-(5-phospho-D-ribosyl)imidazole-4-carboxamide. It functions in the pathway purine metabolism; IMP biosynthesis via de novo pathway; 5-formamido-1-(5-phospho-D-ribosyl)imidazole-4-carboxamide from 5-amino-1-(5-phospho-D-ribosyl)imidazole-4-carboxamide (10-formyl THF route): step 1/1. The protein operates within purine metabolism; IMP biosynthesis via de novo pathway; IMP from 5-formamido-1-(5-phospho-D-ribosyl)imidazole-4-carboxamide: step 1/1. The chain is Bifunctional purine biosynthesis protein PurH from Streptococcus agalactiae serotype Ia (strain ATCC 27591 / A909 / CDC SS700).